The chain runs to 223 residues: Ethylene-inducing xylanase 1 (223 aa).

Positions 1–19 are cleaved as a signal peptide; it reads MVSFTSLLAAFSVVSGVLT. Residues 34–223 form the GH11 domain; sequence KRTPSSTGTS…SSGSATMTVS (190 aa). Catalysis depends on glutamate 119, which acts as the Nucleophile. The interval 174-184 is nuclear localization signal; it reads RRTKRTSGSVN. Residue glutamate 210 is the Proton donor of the active site.

Belongs to the glycosyl hydrolase 11 (cellulase G) family.

The protein localises to the secreted. Its subcellular location is the host nucleus. The enzyme catalyses Endohydrolysis of (1-&gt;4)-beta-D-xylosidic linkages in xylans.. The protein operates within glycan degradation; xylan degradation. Endo-1,4-beta-xylanase involved in the hydrolysis of xylan, a major structural heterogeneous polysaccharide found in plant biomass representing the second most abundant polysaccharide in the biosphere, after cellulose. Acts as an effector that localizes to the host nucleus to contribute to the virulence process. Induces host innate immunity responses; triggers BAK1-and SOBIR1-dependent cell death, salicylic acid signaling and jasmonic acid signaling. Does not exhibit any cell death when transiently expressed in N.benthamiana. The sequence is that of Ethylene-inducing xylanase 1 from Verticillium dahliae (strain VdLs.17 / ATCC MYA-4575 / FGSC 10137) (Verticillium wilt).